The primary structure comprises 289 residues: Probable aquaporin PIP-type 7a (289 aa).

The interval 1–39 (MEAKEQDVSLGANKFPERQPLGIAAQSQDEPKDYQEPPP) is disordered. Over 1–57 (MEAKEQDVSLGANKFPERQPLGIAAQSQDEPKDYQEPPPAPLFEPSELTSWSFYRAG) the chain is Cytoplasmic. The helical transmembrane segment at 58-78 (IAEFIATFLFLYITVLTVMGV) threads the bilayer. Residues 79 to 91 (VRESSKCKTVGIQ) lie on the Extracellular side of the membrane. Residues 92–112 (GIAWAFGGMIFALVYCTAGIS) traverse the membrane as a helical segment. The Cytoplasmic portion of the chain corresponds to 113–135 (GGHINPAVTFGLFLARKLSLTRA). The NPA 1 motif lies at 117-119 (NPA). The chain crosses the membrane as a helical span at residues 136-156 (IFYMVMQVLGAICGAGVVKGF). The Extracellular segment spans residues 157–178 (EGKQRFGDLNGGANFVAPGYTK). Residues 179–199 (GDGLGAEIVGTFILVYTVFSA) traverse the membrane as a helical segment. Topologically, residues 200-212 (TDAKRSARDSHVP) are cytoplasmic. The helical transmembrane segment at 213-233 (ILAPLPIGFAVFLVHLATIPI) threads the bilayer. Topologically, residues 234-260 (TGTGINPARSLGAAIVFNKKIGWNDHW) are extracellular. The short motif at 239–241 (NPA) is the NPA 2 element. The chain crosses the membrane as a helical span at residues 261 to 281 (IFWVGPFIGAALAALYHQVVI). Residues 282–289 (RAIPFKSK) lie on the Cytoplasmic side of the membrane.

This sequence belongs to the MIP/aquaporin (TC 1.A.8) family. PIP (TC 1.A.8.11) subfamily.

Its subcellular location is the cell membrane. Aquaporins facilitate the transport of water and small neutral solutes across cell membranes. The protein is Probable aquaporin PIP-type 7a (TRG-31) of Pisum sativum (Garden pea).